The sequence spans 477 residues: Cysteine--tRNA ligase (477 aa).

Cys29 serves as a coordination point for Zn(2+). Residues 31-41 carry the 'HIGH' region motif; the sequence is PTVQASPHIGH. The Zn(2+) site is built by Cys219, His244, and Glu248. The short motif at 275–279 is the 'KMSKS' region element; the sequence is KMSKS. Lys278 lines the ATP pocket.

This sequence belongs to the class-I aminoacyl-tRNA synthetase family. In terms of assembly, monomer. It depends on Zn(2+) as a cofactor.

Its subcellular location is the cytoplasm. The catalysed reaction is tRNA(Cys) + L-cysteine + ATP = L-cysteinyl-tRNA(Cys) + AMP + diphosphate. This is Cysteine--tRNA ligase from Leifsonia xyli subsp. xyli (strain CTCB07).